The following is a 405-amino-acid chain: MSTSIRICSYLLLPLIYLLVNVKIAQLGESFPITIVTFLPVLLLLFLERISVKKLMIALGIGAGLTAFNYLFGQSLDASKYVTSTMLFVYIVIIIGMVWSIRFKTISPHNHRKILRFFYLVVGLVVALAAVEMAQIILTGGSSIMESISKYLIYSNSYVLNFIKFGGKRTTALYFEPAFFALALISIWLSIKQFGIKTPKTDAMILAGIILSGSFSGVMTFILFYLLEWAFQYLNKEAIKKKLPLALISLAVFLVGVVIAFPYISTRLGDLGTEGSSSYYRIVGPLVMVGYSLTHIDGVVRFGSLYEYVASFGIFNGADVGKTIDNGLYLLIIYFSWFAVFLSLWYMGKVIKMMINAFGDNRNFRVQLYLFTPVSLFFTGSIFSPEYAFLIVCPFILRKALNITR.

Transmembrane regions (helical) follow at residues 5-25 (IRICSYLLLPLIYLLVNVKIA), 27-47 (LGESFPITIVTFLPVLLLLFL), 55-75 (LMIALGIGAGLTAFNYLFGQS), 81-101 (YVTSTMLFVYIVIIIGMVWSI), 117-137 (FFYLVVGLVVALAAVEMAQII), 171-191 (TALYFEPAFFALALISIWLSI), 204-224 (MILAGIILSGSFSGVMTFILF), 244-264 (PLALISLAVFLVGVVIAFPYI), 282-302 (IVGPLVMVGYSLTHIDGVVRF), 327-347 (GLYLLIIYFSWFAVFLSLWYM), and 376-396 (LFFTGSIFSPEYAFLIVCPFI).

It localises to the cell inner membrane. The protein operates within slime biogenesis; slime polysaccharide biosynthesis. The protein is Putative colanic acid polymerase (wcaD) of Escherichia coli (strain K12).